Reading from the N-terminus, the 308-residue chain is Ribonuclease 3 (308 aa).

An RNase III domain is found at 20–145; sequence YLRFYKMLGF…LVGAIYLDRG (126 aa). Glu-62 lines the Mg(2+) pocket. Residue Asp-66 is part of the active site. Mg(2+)-binding residues include Asn-131 and Glu-134. Glu-134 is an active-site residue. Residues 173–242 form the DRBM domain; it reads NFKSKLIEWS…ARVALGKIKN (70 aa). Residues 261–281 form a disordered region; that stretch reads QEEVTVSDSKPSDSGAVTPDL.

This sequence belongs to the ribonuclease III family. In terms of assembly, homodimer. It depends on Mg(2+) as a cofactor.

The protein localises to the cytoplasm. The enzyme catalyses Endonucleolytic cleavage to 5'-phosphomonoester.. Functionally, digests double-stranded RNA. Involved in the processing of primary rRNA transcript to yield the immediate precursors to the large and small rRNAs (23S and 16S). Processes some mRNAs, and tRNAs when they are encoded in the rRNA operon. Processes pre-crRNA and tracrRNA of type II CRISPR loci if present in the organism. The chain is Ribonuclease 3 from Phocaeicola vulgatus (strain ATCC 8482 / DSM 1447 / JCM 5826 / CCUG 4940 / NBRC 14291 / NCTC 11154) (Bacteroides vulgatus).